Reading from the N-terminus, the 105-residue chain is NADH-quinone oxidoreductase subunit K (105 aa).

A run of 3 helical transmembrane segments spans residues 8–28 (LAAY…GVFL), 34–54 (IILL…LVAF), and 65–85 (VFVF…LAIL).

It belongs to the complex I subunit 4L family. In terms of assembly, NDH-1 is composed of 14 different subunits. Subunits NuoA, H, J, K, L, M, N constitute the membrane sector of the complex.

Its subcellular location is the cell inner membrane. The catalysed reaction is a quinone + NADH + 5 H(+)(in) = a quinol + NAD(+) + 4 H(+)(out). NDH-1 shuttles electrons from NADH, via FMN and iron-sulfur (Fe-S) centers, to quinones in the respiratory chain. The immediate electron acceptor for the enzyme in this species is believed to be ubiquinone. Couples the redox reaction to proton translocation (for every two electrons transferred, four hydrogen ions are translocated across the cytoplasmic membrane), and thus conserves the redox energy in a proton gradient. The polypeptide is NADH-quinone oxidoreductase subunit K (Acidithiobacillus ferrooxidans (strain ATCC 23270 / DSM 14882 / CIP 104768 / NCIMB 8455) (Ferrobacillus ferrooxidans (strain ATCC 23270))).